Here is a 409-residue protein sequence, read N- to C-terminus: Diels-Alderase ucsH (409 aa).

Residues 386-406 (IYFFICMLLAVVTFGYINILE) traverse the membrane as a helical segment.

Belongs to the Diels-Alderase family.

It is found in the membrane. It participates in mycotoxin biosynthesis. In terms of biological role, diels-Alderase; part of the gene cluster that mediates the biosynthesis of UCS1025A, a member of the pyrrolizidinone family that acts as a strong telomerase inhibitor and displays potent antibacterial and antitumor properties. These compounds share a hemiaminal-containing pyrrolizidinone core fused with a gamma-lactone, giving a furopyrrolizidine that is connected to a decalin fragment. The polyketide synthase module (PKS) of the PKS-NRPS ucsA is responsible for the synthesis of the polyketide backbone via the condensation of an acetyl-CoA starter unit with 6 malonyl-CoA units. The downstream nonribosomal peptide synthetase (NRPS) module then amidates the carboxyl end of the polyketide with a 2S,3S-methylproline derived from L-isoleucine by the 2-oxoglutarate-dependent dioxygenase ucsF which converts L-isoleucine to (4S,5S)-4-methylpyrroline-5-carboxylate that is further converted to 2S,3S-methylproline by the pyrroline-5-carboxylate reductase ucsG. Reductive release of the completed aminoacyl polyketide from the assembly line can form the 3-pyrrolin-2-one structure via an intramolecular Knoevenagel reaction. Because ucsA lacks a designated enoylreductase (ER) domain, the required activity is provided the enoyl reductase ucsL. This keto acyclic precursor is the substrate of the Diels-Alderase ucsH, that catalyzes the Diels-Alder cycloaddition. Oxidation of the 3S-methyl group to a carboxylate by the cytochrome P450 monooxygenase ucsK allows an oxa-Michael cyclization that might involve the reductase/dehydrogenase ucsI and which furnishes the furopyrrolizidine. The oxidase ucsJ likely plays a critical role in stereoselective reduction of the C5-C6 double bond to afford the required R-configured carboxylate group. Further enolization and oxidation at C5 by an unidentified enzyme affords the last intermediate that can undergo oxa-Michael cyclization to yield UCS1025A. The sequence is that of Diels-Alderase ucsH from Acremonium sp.